Reading from the N-terminus, the 497-residue chain is MENLSKRFNALQDQLMNIYESAPDTLESQIEHWQTLRKEAVLLYFARQHGISRVGYQPVPVLAVSEAKAKQAIGMVLRLQSLQKSEYGSEPWSLVDASAETFRSPPENHFKKGPISVEVIYDKDKDNANAYTMWRFVYYQDDDDKWHKSASGVNQTGIYFMQGTFRHYYVLFADDASRYSTTGQWEVKVNKETVFAPVTSSTPPDSPGGQADSNASSQTPATTTDSTTRQSPRKQSQQTNTKGRRYGRRPSSRTRRTTQTRQRRRSRSKSKSKSRSRSRSRHRSRSRSRSESPRRRSRYRSRSGSRGRVALRAITTTTTTTTRRAGGGSPTSTSSTTSQRSRQLRGGGRGGSRQRARGRRSSSTSPTPSKRSRGESESVRQHGISPSDVGTAVYTVSSRHTGRLGRLLDEALDPPVILVRGEPNTLKCFRNRAKQRYTGLYKSFSTAWSWVAGDGTERLGRSRMLISFISFSQRKDFDETVKYPKGVDRSFGSFDSL.

The interval 1–201 (MENLSKRFNA…ETVFAPVTSS (201 aa)) is transactivation domain. The disordered stretch occupies residues 197–393 (PVTSSTPPDS…ISPSDVGTAV (197 aa)). A compositionally biased stretch (low complexity) spans 215 to 230 (ASSQTPATTTDSTTRQ). Basic residues-rich tracts occupy residues 242–287 (KGRR…SRSR) and 295–305 (RRSRYRSRSGS). Residues 315 to 341 (TTTTTTTTRRAGGGSPTSTSSTTSQRS) show a composition bias toward low complexity. Residues 413 to 497 (DPPVILVRGE…DRSFGSFDSL (85 aa)) are DNA-binding domain.

It belongs to the papillomaviridae E2 protein family. Binds DNA as homodimer. Interacts with protein E1; this interaction greatly increases E1 DNA-binding activity. Interacts with protein L1; this interaction enhances E2-dependent replication and transcription activation. Interacts with protein L2; this interaction inhibits E2 transcriptional activity but not DNA replication function E2. Interacts with protein E7; this interaction inhibits E7 oncogenic activity. Interacts with host TAF1; this interaction modulates E2-dependent transcriptional regulation. Interacts with host BRD4; this interaction mediates E2 transcriptional activation function. Additionally, the interaction with host BRD4 on mitotic chromosomes mediates tethering of the viral genome. Interacts with host TOPBP1; this interaction is required for optimal viral DNA replication. In terms of processing, phosphorylated.

The protein localises to the host nucleus. In terms of biological role, plays a role in the initiation of viral DNA replication. A dimer of E2 interacts with a dimer of E1 in order to improve specificity of E1 DNA binding activity. Once the complex recognizes and binds DNA at specific sites, the E2 dimer is removed from DNA. E2 also regulates viral transcription through binding to the E2RE response element (5'-ACCNNNNNNGGT-3') present in multiple copies in the regulatory regions of the viral genome. Activates or represses transcription depending on E2RE's position with regards to proximal promoter elements including the TATA-box. Repression occurs by sterically hindering the assembly of the transcription initiation complex. This Homo sapiens (Human) protein is Regulatory protein E2.